The primary structure comprises 81 residues: Small ribosomal subunit protein bS16c (81 aa).

The protein belongs to the bacterial ribosomal protein bS16 family.

It is found in the plastid. It localises to the chloroplast. This chain is Small ribosomal subunit protein bS16c, found in Emiliania huxleyi (Coccolithophore).